Consider the following 153-residue polypeptide: Probable phospholipase A2 homolog 2 (153 aa).

The first 25 residues, 1-25 (MRFFLKLAPRCSVLLLLLLVTASRG), serve as a signal peptide directing secretion. 6 cysteine pairs are disulfide-bonded: Cys42/Cys70, Cys46/Cys76, Cys51/Cys123, Cys63/Cys83, Cys82/Cys109, and Cys89/Cys102. Tyr62, Gly64, and Tyr67 together coordinate Ca(2+). The active site involves His86. Asp87 provides a ligand contact to Ca(2+).

The protein belongs to the phospholipase A2 family. It depends on Ca(2+) as a cofactor.

It localises to the secreted. The catalysed reaction is a 1,2-diacyl-sn-glycero-3-phosphocholine + H2O = a 1-acyl-sn-glycero-3-phosphocholine + a fatty acid + H(+). PA2 catalyzes the calcium-dependent hydrolysis of the 2-acyl groups in 3-sn-phosphoglycerides. Releases lysophospholipids (LPLs) and free fatty acids (FFAs) from membrane phospholipids in response to hormones and other external stimuli. This is Probable phospholipase A2 homolog 2 (PLA2-II) from Oryza sativa subsp. japonica (Rice).